We begin with the raw amino-acid sequence, 357 residues long: UDP-N-acetylglucosamine--N-acetylmuramyl-(pentapeptide) pyrophosphoryl-undecaprenol N-acetylglucosamine transferase (357 aa).

UDP-N-acetyl-alpha-D-glucosamine-binding positions include 13–15 (TGG), asparagine 125, arginine 161, serine 189, isoleucine 243, and glutamine 288.

The protein belongs to the glycosyltransferase 28 family. MurG subfamily.

It is found in the cell inner membrane. It carries out the reaction di-trans,octa-cis-undecaprenyl diphospho-N-acetyl-alpha-D-muramoyl-L-alanyl-D-glutamyl-meso-2,6-diaminopimeloyl-D-alanyl-D-alanine + UDP-N-acetyl-alpha-D-glucosamine = di-trans,octa-cis-undecaprenyl diphospho-[N-acetyl-alpha-D-glucosaminyl-(1-&gt;4)]-N-acetyl-alpha-D-muramoyl-L-alanyl-D-glutamyl-meso-2,6-diaminopimeloyl-D-alanyl-D-alanine + UDP + H(+). It functions in the pathway cell wall biogenesis; peptidoglycan biosynthesis. In terms of biological role, cell wall formation. Catalyzes the transfer of a GlcNAc subunit on undecaprenyl-pyrophosphoryl-MurNAc-pentapeptide (lipid intermediate I) to form undecaprenyl-pyrophosphoryl-MurNAc-(pentapeptide)GlcNAc (lipid intermediate II). This Bordetella pertussis (strain Tohama I / ATCC BAA-589 / NCTC 13251) protein is UDP-N-acetylglucosamine--N-acetylmuramyl-(pentapeptide) pyrophosphoryl-undecaprenol N-acetylglucosamine transferase.